We begin with the raw amino-acid sequence, 474 residues long: ATP synthase subunit beta (474 aa).

Residue Gly153–Thr160 participates in ATP binding.

This sequence belongs to the ATPase alpha/beta chains family. As to quaternary structure, F-type ATPases have 2 components, CF(1) - the catalytic core - and CF(0) - the membrane proton channel. CF(1) has five subunits: alpha(3), beta(3), gamma(1), delta(1), epsilon(1). CF(0) has three main subunits: a(1), b(2) and c(9-12). The alpha and beta chains form an alternating ring which encloses part of the gamma chain. CF(1) is attached to CF(0) by a central stalk formed by the gamma and epsilon chains, while a peripheral stalk is formed by the delta and b chains.

The protein resides in the cell inner membrane. It catalyses the reaction ATP + H2O + 4 H(+)(in) = ADP + phosphate + 5 H(+)(out). Its function is as follows. Produces ATP from ADP in the presence of a proton gradient across the membrane. The catalytic sites are hosted primarily by the beta subunits. The polypeptide is ATP synthase subunit beta (Rickettsia typhi (strain ATCC VR-144 / Wilmington)).